We begin with the raw amino-acid sequence, 203 residues long: Putative 3-methyladenine DNA glycosylase (203 aa).

The protein belongs to the DNA glycosylase MPG family.

The polypeptide is Putative 3-methyladenine DNA glycosylase (Clostridium beijerinckii (strain ATCC 51743 / NCIMB 8052) (Clostridium acetobutylicum)).